Consider the following 352-residue polypeptide: Photosystem II D2 protein (352 aa).

The Cytoplasmic portion of the chain corresponds to 1–31 (MTIAIGRAPAERGWFDILDDWLKRDRFVFVG). A helical transmembrane segment spans residues 32 to 53 (WSGILLFPCAYLALGGWLTGTT). Over 54-108 (FVTSWYTHGLASSYLEGCNFLTVAVSTPANSMGHSLLLLWGPEAQGDFTRWCQLG) the chain is Lumenal. Residues 109–131 (GLWTFIALHGAFGLIGFMLRQFE) form a helical membrane-spanning segment. Residue histidine 117 coordinates chlorophyll a. Residue glutamine 129 coordinates pheophytin a. The Cytoplasmic segment spans residues 132-140 (IARLVGVRP). The chain crosses the membrane as a helical span at residues 141-160 (YNAIAFSAPIAVFVSVFLIY). Residue asparagine 142 coordinates pheophytin a. The Lumenal portion of the chain corresponds to 161–193 (PLGQSSWFFAPSFGVAAIFRFLLFFQGFHNWTL). Residues 194–217 (NPFHMMGVAGVLGGALLCAIHGAT) traverse the membrane as a helical segment. Histidine 197 is a chlorophyll a binding site. A plastoquinone is bound by residues histidine 214 and phenylalanine 261. Histidine 214 is a Fe cation binding site. Over 218-265 (VENTLFQDGEGASTFRAFNPTQAEETYSMVTANRFWSQIFGIAFSNKR) the chain is Cytoplasmic. The chain crosses the membrane as a helical span at residues 266-288 (WLHFFMLFVPVTGLWMSAIGVVG). Histidine 268 is a binding site for Fe cation. The Lumenal portion of the chain corresponds to 289-352 (LALNLRSYDF…EEVLPRGNAL (64 aa)).

It belongs to the reaction center PufL/M/PsbA/D family. PSII is composed of 1 copy each of membrane proteins PsbA, PsbB, PsbC, PsbD, PsbE, PsbF, PsbH, PsbI, PsbJ, PsbK, PsbL, PsbM, PsbT, PsbX, PsbY, PsbZ, Psb30/Ycf12, peripheral proteins PsbO, CyanoQ (PsbQ), PsbU, PsbV and a large number of cofactors. It forms dimeric complexes. Part of a photosystem II (PSII) assembly intermediate complex PSII-I; crystallized from a strain deleted of psbJ, it forms monomeric PSII before addition of the oxygen evolving complex. PSII-I includes 3 assembly factors not found in mature PSII (Psb27, Psb28 and Psb34). It depends on The D1/D2 heterodimer binds P680, chlorophylls that are the primary electron donor of PSII, and subsequent electron acceptors. It shares a non-heme iron and each subunit binds pheophytin, quinone, additional chlorophylls, carotenoids and lipids. There is also a Cl(-1) ion associated with D1 and D2, which is required for oxygen evolution. PSII binds additional chlorophylls, carotenoids and specific lipids. as a cofactor.

It localises to the cellular thylakoid membrane. It carries out the reaction 2 a plastoquinone + 4 hnu + 2 H2O = 2 a plastoquinol + O2. Functionally, photosystem II (PSII) is a light-driven water:plastoquinone oxidoreductase that uses light energy to abstract electrons from H(2)O, generating O(2) and a proton gradient subsequently used for ATP formation. It consists of a core antenna complex that captures photons, and an electron transfer chain that converts photonic excitation into a charge separation. The D1/D2 (PsbA/PsbD) reaction center heterodimer binds P680, the primary electron donor of PSII as well as several subsequent electron acceptors. D2 is needed for assembly of a stable PSII complex. In Thermosynechococcus vestitus (strain NIES-2133 / IAM M-273 / BP-1), this protein is Photosystem II D2 protein.